A 55-amino-acid polypeptide reads, in one-letter code: Large ribosomal subunit protein bL33 (55 aa).

It belongs to the bacterial ribosomal protein bL33 family.

The sequence is that of Large ribosomal subunit protein bL33 from Beijerinckia indica subsp. indica (strain ATCC 9039 / DSM 1715 / NCIMB 8712).